A 181-amino-acid chain; its full sequence is Oligoribonuclease (181 aa).

In terms of domain architecture, Exonuclease spans 8–171 (LIWIDLEMTG…DDIRESVAEL (164 aa)). Residue Tyr129 is part of the active site.

This sequence belongs to the oligoribonuclease family.

The protein resides in the cytoplasm. Functionally, 3'-to-5' exoribonuclease specific for small oligoribonucleotides. The chain is Oligoribonuclease from Salmonella choleraesuis (strain SC-B67).